The following is a 436-amino-acid chain: MSQALPLVTRQGDRIAIVSGLRTPFARQATAFHGIPAVELGKMVVGELLARSEIPAEVIEQLVFGQVVQMPEAPNIAREIVLGTGMNVHTDAYSVSRACATSFQAVANVAESLMAGTIRAGIAGGADSSSVLPIGVSKKLARILVDVNKARTTGQKLKLFSRLRLRDLMPVPPAVAEYSTGLRMGDTAEQMAKTYGITREQQDALAHRSHQRAAQAWAEGKLADEVMTTYAPPYKEPFSEDNNIRGNSTLADYAKLRPAFDRQHGTVTAANSTPLTDGAAAVILMTESRAKELGLAPLGYLRSYAFTAIDVWQDMLLGPAWSTPLALERAGLTLADLSLIDMHEAFAAQTLANIQLLGSERFARDVLGRAHATGEVDDSKFNVLGGSIAYGHPFAATGARMITQTLHELRRRGGGFGLVTACAAGGLGAAMVLEAE.

The Acyl-thioester intermediate role is filled by Cys-99. Catalysis depends on proton acceptor residues His-392 and Cys-422.

It belongs to the thiolase-like superfamily. Thiolase family. As to quaternary structure, heterotetramer of two alpha chains (FadJ) and two beta chains (FadI).

The protein localises to the cytoplasm. The enzyme catalyses an acyl-CoA + acetyl-CoA = a 3-oxoacyl-CoA + CoA. It participates in lipid metabolism; fatty acid beta-oxidation. Its function is as follows. Catalyzes the final step of fatty acid oxidation in which acetyl-CoA is released and the CoA ester of a fatty acid two carbons shorter is formed. In Citrobacter koseri (strain ATCC BAA-895 / CDC 4225-83 / SGSC4696), this protein is 3-ketoacyl-CoA thiolase.